A 106-amino-acid polypeptide reads, in one-letter code: Testis-specific basic protein Y 2 (106 aa).

Belongs to the VCX/VCY family. As to quaternary structure, interacts with MAP1S. Interacts with UBE3A (via HECT domain). In terms of tissue distribution, expressed exclusively in testis. Expressed in ejaculated spermatozoa of germ cell. Expressed in the nuclei of spermatogonia, spermatocytes, and round spermatids, except elongated spermatids (at protein level).

In Homo sapiens (Human), this protein is Testis-specific basic protein Y 2 (BPY2).